We begin with the raw amino-acid sequence, 1132 residues long: Tyrosine-protein kinase JAK2 (1132 aa).

Residues 1 to 239 (MGMACLTMTE…RYRFRRFIQQ (239 aa)) are interaction with cytokine/interferon/growth hormone receptors. In terms of domain architecture, FERM spans 37–380 (PVLQVYLYHS…GYYRLTADAH (344 aa)). A Phosphotyrosine; by autocatalysis modification is found at tyrosine 119. Residues tyrosine 372 and tyrosine 373 each carry the phosphotyrosine modification. Residues 401–482 (HGPISMDFAI…SLKDLLNCYQ (82 aa)) enclose the SH2; atypical domain. A Phosphoserine modification is found at serine 523. Residues 545-809 (LIFNESLGQG…AVIRDLNSLF (265 aa)) form the Protein kinase 1 domain. 2 positions are modified to phosphotyrosine: tyrosine 570 and tyrosine 813. Residues 849-1126 (LKFLQQLGKG…RDLSLRVDQI (278 aa)) form the Protein kinase 2 domain. 855-863 (LGKGNFGSV) contributes to the ATP binding site. Tyrosine 868 carries the phosphotyrosine; by autocatalysis modification. Position 882 (lysine 882) interacts with ATP. Residues tyrosine 966 and tyrosine 972 each carry the phosphotyrosine; by autocatalysis modification. The active-site Proton acceptor is the aspartate 976. Tyrosine 1007 and tyrosine 1008 each carry phosphotyrosine; by autocatalysis.

It belongs to the protein kinase superfamily. Tyr protein kinase family. JAK subfamily. In terms of assembly, interacts with IL23R, SKB1 and STAM2. Interacts with EPOR. Interacts with LYN. Interacts with SIRPA. Interacts with SH2B1. Interacts with TEC. Interacts with IFNGR2 (via intracellular domain). Interacts with LEPR (Isoform B). Interacts with HSP90AB1; promotes functional activation in a heat shock-dependent manner. Interacts with STRA6. Interacts with ASB2; the interaction targets JAK2 for Notch-induced proteasomal degradation. Mg(2+) is required as a cofactor. Post-translationally, autophosphorylated, leading to regulate its activity. Leptin promotes phosphorylation on tyrosine residues, including phosphorylation on Tyr-813. Autophosphorylation on Tyr-119 in response to EPO down-regulates its kinase activity. Autophosphorylation on Tyr-868, Tyr-966 and Tyr-972 in response to growth hormone (GH) are required for maximal kinase activity. Also phosphorylated by TEC. Phosphorylated on tyrosine residues in response to interferon gamma signaling. Phosphorylated on tyrosine residues in response to a signaling cascade that is activated by increased cellular retinol. In terms of processing, undergoes Notch-induced ubiquitination and subsequent proteasomal degradation which is mediated by ASB1 or ASB2, the substrate-recognition components of probable ECS E3 ubiquitin-protein ligase complexes. In terms of tissue distribution, ubiquitously expressed throughout most tissues.

Its subcellular location is the endomembrane system. It is found in the cytoplasm. It localises to the nucleus. The catalysed reaction is L-tyrosyl-[protein] + ATP = O-phospho-L-tyrosyl-[protein] + ADP + H(+). Regulated by autophosphorylation, can both activate or decrease activity. Heme regulates its activity by enhancing the phosphorylation on Tyr-1007 and Tyr-1008. In terms of biological role, non-receptor tyrosine kinase involved in various processes such as cell growth, development, differentiation or histone modifications. Mediates essential signaling events in both innate and adaptive immunity. In the cytoplasm, plays a pivotal role in signal transduction via its association with type I receptors such as growth hormone (GHR), prolactin (PRLR), leptin (LEPR), erythropoietin (EPOR), thrombopoietin (THPO); or type II receptors including IFN-alpha, IFN-beta, IFN-gamma and multiple interleukins. Following ligand-binding to cell surface receptors, phosphorylates specific tyrosine residues on the cytoplasmic tails of the receptor, creating docking sites for STATs proteins. Subsequently, phosphorylates the STATs proteins once they are recruited to the receptor. Phosphorylated STATs then form homodimer or heterodimers and translocate to the nucleus to activate gene transcription. For example, cell stimulation with erythropoietin (EPO) during erythropoiesis leads to JAK2 autophosphorylation, activation, and its association with erythropoietin receptor (EPOR) that becomes phosphorylated in its cytoplasmic domain. Then, STAT5 (STAT5A or STAT5B) is recruited, phosphorylated and activated by JAK2. Once activated, dimerized STAT5 translocates into the nucleus and promotes the transcription of several essential genes involved in the modulation of erythropoiesis. Part of a signaling cascade that is activated by increased cellular retinol and that leads to the activation of STAT5 (STAT5A or STAT5B). In addition, JAK2 mediates angiotensin-2-induced ARHGEF1 phosphorylation. Plays a role in cell cycle by phosphorylating CDKN1B. Cooperates with TEC through reciprocal phosphorylation to mediate cytokine-driven activation of FOS transcription. In the nucleus, plays a key role in chromatin by specifically mediating phosphorylation of 'Tyr-41' of histone H3 (H3Y41ph), a specific tag that promotes exclusion of CBX5 (HP1 alpha) from chromatin. Up-regulates the potassium voltage-gated channel activity of KCNA3. The sequence is that of Tyrosine-protein kinase JAK2 from Rattus norvegicus (Rat).